The following is a 144-amino-acid chain: Protein cornichon homolog 1 (144 aa).

Residues 1 to 10 lie on the Cytoplasmic side of the membrane; it reads MAFTFAAFCY. A helical transmembrane segment spans residues 11–31; that stretch reads MLALLLTAALIFFAIWHIIAF. Over 32–56 the chain is Lumenal; that stretch reads DELKTDYKNPIDQCNTLNPLVLPEY. Residues 57 to 77 traverse the membrane as a helical segment; it reads LIHAFFCVMFLCAAEWLTLGL. Residues 78-122 are Cytoplasmic-facing; sequence NMPLLAYHIWRYMSRPVMSGPGLYDPTTIMNADILAYCQKEGWCK. A helical membrane pass occupies residues 123–143; the sequence is LAFYLLAFFYYLYGMIYVLVS. Position 144 (serine 144) is a topological domain, lumenal.

It belongs to the cornichon family. In terms of assembly, interacts with AREG immature precursor and with immature TGFA, i.e. with a prosegment and lacking full N-glycosylation, but not with the fully N-glycosylated form. In the Golgi apparatus, may form a complex with GORASP55 and transmembrane TGFA.

The protein resides in the endoplasmic reticulum membrane. Its subcellular location is the golgi apparatus membrane. Involved in the selective transport and maturation of TGF-alpha family proteins. The polypeptide is Protein cornichon homolog 1 (CNIH1) (Bos taurus (Bovine)).